Reading from the N-terminus, the 304-residue chain is MIHQRTLKAPVTASGVGLHSGDRIRLTLRPAPPDTGIVFRRTDLPEAADILCSPELVNDTRLSSTLVTPDGVRVGTIEHLMSALAGLGIDNLYVEMTAQETPIMDGSAAPFIYLLQTAGIVEQPAKKRFIRVLEPVGVAEGDKWVRLEPYDGFQVSLEISFDHPAFRLAPQKVDIDFARTSYIDEIARARTFGFMYEVETMARMGLGRGGSLDNAIVIDDEFVLNRDGLRFPDEFVRHKILDAIGDLYIIGHPLIAAFSGYKSGHAMNNQLLRQLLARPSAWEYVTFSHSEDVPSSFHRIPHLA.

Zn(2+) contacts are provided by His79, His238, and Asp242. Residue His265 is the Proton donor of the active site.

It belongs to the LpxC family. Zn(2+) is required as a cofactor.

It catalyses the reaction a UDP-3-O-[(3R)-3-hydroxyacyl]-N-acetyl-alpha-D-glucosamine + H2O = a UDP-3-O-[(3R)-3-hydroxyacyl]-alpha-D-glucosamine + acetate. It participates in glycolipid biosynthesis; lipid IV(A) biosynthesis; lipid IV(A) from (3R)-3-hydroxytetradecanoyl-[acyl-carrier-protein] and UDP-N-acetyl-alpha-D-glucosamine: step 2/6. Functionally, catalyzes the hydrolysis of UDP-3-O-myristoyl-N-acetylglucosamine to form UDP-3-O-myristoylglucosamine and acetate, the committed step in lipid A biosynthesis. This Laribacter hongkongensis (strain HLHK9) protein is UDP-3-O-acyl-N-acetylglucosamine deacetylase.